Reading from the N-terminus, the 338-residue chain is Phenylalanine--tRNA ligase alpha subunit (338 aa).

Residue E253 participates in Mg(2+) binding.

Belongs to the class-II aminoacyl-tRNA synthetase family. Phe-tRNA synthetase alpha subunit type 1 subfamily. In terms of assembly, tetramer of two alpha and two beta subunits. Requires Mg(2+) as cofactor.

The protein localises to the cytoplasm. The catalysed reaction is tRNA(Phe) + L-phenylalanine + ATP = L-phenylalanyl-tRNA(Phe) + AMP + diphosphate + H(+). The chain is Phenylalanine--tRNA ligase alpha subunit from Syntrophotalea carbinolica (strain DSM 2380 / NBRC 103641 / GraBd1) (Pelobacter carbinolicus).